Consider the following 186-residue polypeptide: Protein GrpE (186 aa).

It belongs to the GrpE family. As to quaternary structure, homodimer.

The protein resides in the cytoplasm. Its function is as follows. Participates actively in the response to hyperosmotic and heat shock by preventing the aggregation of stress-denatured proteins, in association with DnaK and GrpE. It is the nucleotide exchange factor for DnaK and may function as a thermosensor. Unfolded proteins bind initially to DnaJ; upon interaction with the DnaJ-bound protein, DnaK hydrolyzes its bound ATP, resulting in the formation of a stable complex. GrpE releases ADP from DnaK; ATP binding to DnaK triggers the release of the substrate protein, thus completing the reaction cycle. Several rounds of ATP-dependent interactions between DnaJ, DnaK and GrpE are required for fully efficient folding. This chain is Protein GrpE, found in Novosphingobium aromaticivorans (strain ATCC 700278 / DSM 12444 / CCUG 56034 / CIP 105152 / NBRC 16084 / F199).